The sequence spans 291 residues: Glutathione S-transferase 2 (291 aa).

The region spanning 2 to 83 (SPVKVFGHPM…YILRKYGGTA (82 aa)) is the GST N-terminal domain. Residues 41-42 (HK), 54-55 (KM), and 67-68 (KS) each bind glutathione. In terms of domain architecture, GST C-terminal spans 93-223 (GIEELAMVDV…RVCKHMPTEF (131 aa)).

The protein belongs to the GST superfamily. Phi family.

It catalyses the reaction RX + glutathione = an S-substituted glutathione + a halide anion + H(+). Conjugation of reduced glutathione to a wide number of exogenous and endogenous hydrophobic electrophiles. This chain is Glutathione S-transferase 2 (GSTA2), found in Triticum aestivum (Wheat).